The sequence spans 483 residues: ATP synthase subunit beta (483 aa).

162 to 169 serves as a coordination point for ATP; sequence GGAGVGKT.

Belongs to the ATPase alpha/beta chains family. F-type ATPases have 2 components, CF(1) - the catalytic core - and CF(0) - the membrane proton channel. CF(1) has five subunits: alpha(3), beta(3), gamma(1), delta(1), epsilon(1). CF(0) has four main subunits: a(1), b(1), b'(1) and c(9-12).

It localises to the cellular thylakoid membrane. It catalyses the reaction ATP + H2O + 4 H(+)(in) = ADP + phosphate + 5 H(+)(out). Produces ATP from ADP in the presence of a proton gradient across the membrane. The catalytic sites are hosted primarily by the beta subunits. In Prochloron didemni, this protein is ATP synthase subunit beta.